We begin with the raw amino-acid sequence, 371 residues long: tRNA-specific 2-thiouridylase MnmA (371 aa).

Residues 13–20 (GMSGGVDS) and Met-39 contribute to the ATP site. Residues 99–101 (NPD) form an interaction with target base in tRNA region. Catalysis depends on Cys-104, which acts as the Nucleophile. A disulfide bridge links Cys-104 with Cys-200. Gly-128 is an ATP binding site. Residues 150-152 (KDQ) are interaction with tRNA. Cys-200 acts as the Cysteine persulfide intermediate in catalysis. The segment at 308-309 (RY) is interaction with tRNA.

This sequence belongs to the MnmA/TRMU family.

The protein localises to the cytoplasm. The catalysed reaction is S-sulfanyl-L-cysteinyl-[protein] + uridine(34) in tRNA + AH2 + ATP = 2-thiouridine(34) in tRNA + L-cysteinyl-[protein] + A + AMP + diphosphate + H(+). Catalyzes the 2-thiolation of uridine at the wobble position (U34) of tRNA, leading to the formation of s(2)U34. This Bacillus mycoides (strain KBAB4) (Bacillus weihenstephanensis) protein is tRNA-specific 2-thiouridylase MnmA.